The following is a 295-amino-acid chain: Giardin subunit alpha-1 (295 aa).

4 Annexin repeats span residues 2-71 (PKVT…MDLF), 73-143 (DRHE…MEKW), 153-223 (GSPE…AHFA), and 226-293 (GMHR…TLWR).

This sequence belongs to the annexin family. Giardin subunit alpha subfamily.

Its subcellular location is the cytoplasm. It localises to the cytoskeleton. Its function is as follows. Giardins are involved in parasite attachment to the intestinal mucosa and in the cytoskeletal disassembly and reassembly that marks the transition from infectious trophozoite to transmissible cyst. They may interact with other cytoskeletal proteins such as microtubules in the microribbons or crossbridges, to maintain the integrity of the ventral disk. The polypeptide is Giardin subunit alpha-1 (Giardia intestinalis (Giardia lamblia)).